A 485-amino-acid polypeptide reads, in one-letter code: GTPase Der (485 aa).

EngA-type G domains are found at residues 3–167 and 176–349; these read PTIA…PEPE and PVFA…NAAM. GTP is bound by residues 9–16, 56–60, 119–122, 182–189, 229–233, and 294–297; these read GRPNVGKS, DTGGF, NKGE, DTAGV, and NKWD. The 85-residue stretch at 350 to 434 folds into the KH-like domain; the sequence is IKMPTPKITR…PLRIQYNVSE (85 aa). The segment at 435 to 485 is disordered; sequence NPYENAEDKPKKKPLRRVSLSNRIEKREGRKEEKNRFKKKTKVSVKKQFSK. Residues 457 to 469 show a composition bias toward basic and acidic residues; that stretch reads RIEKREGRKEEKN. Positions 470–485 are enriched in basic residues; the sequence is RFKKKTKVSVKKQFSK.

The protein belongs to the TRAFAC class TrmE-Era-EngA-EngB-Septin-like GTPase superfamily. EngA (Der) GTPase family. Associates with the 50S ribosomal subunit.

Functionally, GTPase that plays an essential role in the late steps of ribosome biogenesis. The protein is GTPase Der of Neisseria meningitidis serogroup B (strain ATCC BAA-335 / MC58).